The primary structure comprises 334 residues: Aspartate carbamoyltransferase catalytic subunit (334 aa).

Carbamoyl phosphate contacts are provided by R71 and T72. K99 is a binding site for L-aspartate. 3 residues coordinate carbamoyl phosphate: R121, H151, and Q154. R184 and R239 together coordinate L-aspartate. Residues G280 and P281 each contribute to the carbamoyl phosphate site.

This sequence belongs to the aspartate/ornithine carbamoyltransferase superfamily. ATCase family. As to quaternary structure, heterododecamer (2C3:3R2) of six catalytic PyrB chains organized as two trimers (C3), and six regulatory PyrI chains organized as three dimers (R2).

It catalyses the reaction carbamoyl phosphate + L-aspartate = N-carbamoyl-L-aspartate + phosphate + H(+). It participates in pyrimidine metabolism; UMP biosynthesis via de novo pathway; (S)-dihydroorotate from bicarbonate: step 2/3. In terms of biological role, catalyzes the condensation of carbamoyl phosphate and aspartate to form carbamoyl aspartate and inorganic phosphate, the committed step in the de novo pyrimidine nucleotide biosynthesis pathway. The protein is Aspartate carbamoyltransferase catalytic subunit of Pseudomonas savastanoi pv. phaseolicola (strain 1448A / Race 6) (Pseudomonas syringae pv. phaseolicola (strain 1448A / Race 6)).